Reading from the N-terminus, the 445-residue chain is Na(+)-translocating NADH-quinone reductase subunit A (445 aa).

This sequence belongs to the NqrA family. In terms of assembly, composed of six subunits; NqrA, NqrB, NqrC, NqrD, NqrE and NqrF.

It carries out the reaction a ubiquinone + n Na(+)(in) + NADH + H(+) = a ubiquinol + n Na(+)(out) + NAD(+). Functionally, NQR complex catalyzes the reduction of ubiquinone-1 to ubiquinol by two successive reactions, coupled with the transport of Na(+) ions from the cytoplasm to the periplasm. NqrA to NqrE are probably involved in the second step, the conversion of ubisemiquinone to ubiquinol. The protein is Na(+)-translocating NADH-quinone reductase subunit A of Teredinibacter turnerae (strain ATCC 39867 / T7901).